A 209-amino-acid polypeptide reads, in one-letter code: Ribosomal RNA large subunit methyltransferase E (209 aa).

Positions 63, 65, 83, 99, and 124 each coordinate S-adenosyl-L-methionine. The active-site Proton acceptor is the Lys164.

The protein belongs to the class I-like SAM-binding methyltransferase superfamily. RNA methyltransferase RlmE family.

The protein resides in the cytoplasm. The enzyme catalyses uridine(2552) in 23S rRNA + S-adenosyl-L-methionine = 2'-O-methyluridine(2552) in 23S rRNA + S-adenosyl-L-homocysteine + H(+). Specifically methylates the uridine in position 2552 of 23S rRNA at the 2'-O position of the ribose in the fully assembled 50S ribosomal subunit. This chain is Ribosomal RNA large subunit methyltransferase E, found in Shewanella woodyi (strain ATCC 51908 / MS32).